A 683-amino-acid chain; its full sequence is Protein kinase C eta type (683 aa).

Residues 1–118 (MSSGTMKFNG…LRTAGTSDTF (118 aa)) enclose the C2 domain. Phosphoserine is present on residues Ser28 and Ser32. Phorbol-ester/DAG-type zinc fingers lie at residues 171 to 222 (GHKF…VTAC) and 245 to 295 (PHKF…APNC). At Ser317 the chain carries Phosphoserine. A Protein kinase domain is found at 355–614 (FEFIRVLGKG…EHEILRHPFF (260 aa)). ATP is bound by residues 361 to 369 (LGKGSFGKV) and Lys384. Asp479 functions as the Proton acceptor in the catalytic mechanism. A Phosphothreonine; by PDPK1 modification is found at Thr513. The AGC-kinase C-terminal domain occupies 615 to 683 (KEIDWAQLNH…FSYVSPELQL (69 aa)). Position 656 is a phosphothreonine (Thr656). Ser675 is modified (phosphoserine).

Belongs to the protein kinase superfamily. AGC Ser/Thr protein kinase family. PKC subfamily. As to quaternary structure, interacts with FYN. Interacts with RALA. Interacts with DGKQ. In terms of tissue distribution, predominantly expressed in lung and skin.

It localises to the cytoplasm. The enzyme catalyses L-seryl-[protein] + ATP = O-phospho-L-seryl-[protein] + ADP + H(+). It catalyses the reaction L-threonyl-[protein] + ATP = O-phospho-L-threonyl-[protein] + ADP + H(+). Novel PKCs (PRKCD, PRKCE, PRKCH and PRKCQ) are calcium-insensitive, but activated by diacylglycerol (DAG) and phosphatidylserine. Three specific sites; Thr-513 (activation loop of the kinase domain), Thr-656 (turn motif) and Ser-675 (hydrophobic region), need to be phosphorylated for its full activation. Functionally, calcium-independent, phospholipid- and diacylglycerol (DAG)-dependent serine/threonine-protein kinase that is involved in the regulation of cell differentiation in keratinocytes and pre-B cell receptor, mediates regulation of epithelial tight junction integrity and foam cell formation, and is required for glioblastoma proliferation and apoptosis prevention in MCF-7 cells. In keratinocytes, binds and activates the tyrosine kinase FYN, which in turn blocks epidermal growth factor receptor (EGFR) signaling and leads to keratinocyte growth arrest and differentiation. Associates with the cyclin CCNE1-CDK2-CDKN1B complex and inhibits CDK2 kinase activity, leading to RB1 dephosphorylation and thereby G1 arrest in keratinocytes. In association with RALA activates actin depolymerization, which is necessary for keratinocyte differentiation. In the pre-B cell receptor signaling, functions downstream of BLNK by up-regulating IRF4, which in turn activates L chain gene rearrangement. Regulates epithelial tight junctions (TJs) by phosphorylating occludin (OCLN) on threonine residues, which is necessary for the assembly and maintenance of TJs. In association with PLD2 and via TLR4 signaling, is involved in lipopolysaccharide (LPS)-induced RGS2 down-regulation and foam cell formation. Upon PMA stimulation, mediates glioblastoma cell proliferation by activating the mTOR pathway, the PI3K/AKT pathway and the ERK1-dependent phosphorylation of ELK1. Involved in the protection of glioblastoma cells from irradiation-induced apoptosis by preventing caspase-9 activation. In camptothecin-treated MCF-7 cells, regulates NF-kappa-B upstream signaling by activating IKBKB, and confers protection against DNA damage-induced apoptosis. Promotes oncogenic functions of ATF2 in the nucleus while blocking its apoptotic function at mitochondria. Phosphorylates ATF2 which promotes its nuclear retention and transcriptional activity and negatively regulates its mitochondrial localization. This chain is Protein kinase C eta type (Prkch), found in Mus musculus (Mouse).